Reading from the N-terminus, the 294-residue chain is Complement C1q tumor necrosis factor-related protein 2 (294 aa).

The first 24 residues, 1-24, serve as a signal peptide directing secretion; that stretch reads MTIFKKVTTMISWVLLACALPCAA. The disordered stretch occupies residues 42-156; sequence QLVCSLPGPQ…PGPCSCGSSR (115 aa). The Collagen-like domain maps to 48–150; the sequence is PGPQGPPGPP…KGEPGLPGPC (103 aa). The segment covering 50 to 59 has biased composition (pro residues); the sequence is PQGPPGPPGA. The segment covering 75 to 87 has biased composition (basic and acidic residues); the sequence is DGQDGQDGDRGDS. Over residues 105–129 the composition is skewed to low complexity; that stretch reads KGKAGAIGRAGPRGPKGVSGTPGKH. The region spanning 154–290 is the C1q domain; that stretch reads SSRAKSAFSV…GFLIYADQGD (137 aa).

May interact with ERFE.

It is found in the secreted. Its function is as follows. Involved in the regulation of lipid metabolism in adipose tissue and liver. The sequence is that of Complement C1q tumor necrosis factor-related protein 2 (C1qtnf2) from Mus musculus (Mouse).